The sequence spans 76 residues: Protein RALF-like 26 (76 aa).

An N-terminal signal peptide occupies residues 1–22 (MKAWMIILLVICVAVVVEQSEA). A disulfide bond links C37 and C46. N-linked (GlcNAc...) asparagine glycosylation is present at N61. A disulfide bridge connects residues C66 and C72.

This sequence belongs to the plant rapid alkalinization factor (RALF) family.

It is found in the secreted. Cell signaling peptide that may regulate plant stress, growth, and development. Mediates a rapid alkalinization of extracellular space by mediating a transient increase in the cytoplasmic Ca(2+) concentration leading to a calcium-dependent signaling events through a cell surface receptor and a concomitant activation of some intracellular mitogen-activated protein kinases. The polypeptide is Protein RALF-like 26 (RALFL26) (Arabidopsis thaliana (Mouse-ear cress)).